A 592-amino-acid chain; its full sequence is Inactive heparanase-2 (592 aa).

An N-terminal signal peptide occupies residues 1–38 (MRVLCAFPEAMASSSSRPPSCLALVALFLALLLHLSLS). Residues Asn-254 and Asn-392 are each glycosylated (N-linked (GlcNAc...) asparagine).

This sequence belongs to the glycosyl hydrolase 79 family. In terms of assembly, interacts with HPSE. Interacts with SDC1 (via glycan chains).

Its subcellular location is the secreted. The protein resides in the extracellular space. It localises to the extracellular matrix. In terms of biological role, binds heparin and heparan sulfate with high affinity, but lacks heparanase activity. Inhibits HPSE, possibly by competing for its substrates (in vitro). The chain is Inactive heparanase-2 (Hpse2) from Mus musculus (Mouse).